A 204-amino-acid polypeptide reads, in one-letter code: MNPLLQLSCPLLLASQSPRRRALLDRIDVPFEARVSPADETLAPSVAPAEAVRTLARRKARPVAADRPSALVLAADTVVAHDGEILNKPEDSSHARAMLRRLQDTSHAVYTGVSLVHAGSDRTATAVETTAVVLGPLSDAEIRAYVASGSPLDKAGGYGIQDHTAPFFVERIEGDYYNVVGLPLRRLYRTLRASFADLLEASSA.

Aspartate 76 acts as the Proton acceptor in catalysis.

It belongs to the Maf family. YhdE subfamily. A divalent metal cation is required as a cofactor.

It localises to the cytoplasm. It carries out the reaction dTTP + H2O = dTMP + diphosphate + H(+). The catalysed reaction is UTP + H2O = UMP + diphosphate + H(+). Nucleoside triphosphate pyrophosphatase that hydrolyzes dTTP and UTP. May have a dual role in cell division arrest and in preventing the incorporation of modified nucleotides into cellular nucleic acids. In Salinibacter ruber (strain DSM 13855 / M31), this protein is dTTP/UTP pyrophosphatase.